Reading from the N-terminus, the 197-residue chain is Guanylate kinase (197 aa).

The Guanylate kinase-like domain maps to 9–188 (GRLVVFSAPS…AVEAVILAIS (180 aa)). 16–23 (APSGTGKS) is an ATP binding site.

The protein belongs to the guanylate kinase family.

The protein localises to the cytoplasm. The catalysed reaction is GMP + ATP = GDP + ADP. Functionally, essential for recycling GMP and indirectly, cGMP. The protein is Guanylate kinase of Chlorobium luteolum (strain DSM 273 / BCRC 81028 / 2530) (Pelodictyon luteolum).